Here is a 579-residue protein sequence, read N- to C-terminus: MLQMGKAREPNFLILFFFGLILAFGISSEGSQIRHYKWEVEYMFWAPDCNENIVMGINGQFPGPTIRANAGDTVVVELINKLHTEGVVIHWHGILQRGTPWADGTASISQCAINPGETFFYNFTVDNPGTFFYHGHLGMQRSAGLYGSLIVDPPQGKKEPFHYDGEINLLLSDWWHQSIHKQEVGLSSKPIRWIGEPQTILLNGRGQFDCSIAAKYDSNLEPCKLKGSEPCAPYIFHVMPKKTYRIRIASTTALAALNFAIGNHPLLVVEADGNYVQPFYTSDIDIYSGESYSVLITTDQNPSENYWVSVGTRGRHPNTPPGLTLLNYLPNSVSKLPTSPPPETPAWDDFDRSKNFTYRITAAMGSPKPPVKSNRRIFLLNTQNVINGYVKWAINDVSLALPPTPYLGAMKFNLLHAFDQNPPPEVFPEDYDIDTPPTNEKTKIGNGVYQFKIGEIVDVILQNANMMKENLSEIHPWHLHGHDFWVLGYGDGKFTAEEESSLNLKNPPLRNTVVIFPYGWTAIRFVADNPGVWAFHCHIEPHLHMGMGVVFAEGVEKVGRIPTKALACGGTAKSLINNP.

The first 30 residues, methionine 1–glycine 30, serve as a signal peptide directing secretion. 2 Plastocyanin-like domains span residues isoleucine 33–aspartate 152 and aspartate 164–proline 330. Cystine bridges form between cysteine 49–cysteine 231, cysteine 111–cysteine 568, and cysteine 210–cysteine 223. Residues histidine 90 and histidine 92 each coordinate Cu cation. N-linked (GlcNAc...) asparagine glycosylation occurs at asparagine 122. Positions 134 and 136 each coordinate Cu cation. Asparagine 355 and asparagine 470 each carry an N-linked (GlcNAc...) asparagine glycan. One can recognise a Plastocyanin-like 3 domain in the interval asparagine 374–glutamate 553. 8 residues coordinate Cu cation: histidine 475, histidine 478, histidine 480, histidine 536, cysteine 537, histidine 538, histidine 542, and methionine 547.

Belongs to the multicopper oxidase family. Dimer. It depends on Cu cation as a cofactor.

The protein resides in the secreted. The enzyme catalyses 4 L-ascorbate + O2 = 4 monodehydro-L-ascorbate radical + 2 H2O. In terms of biological role, may be involved in a redox system involving ascorbic acid. The sequence is that of L-ascorbate oxidase (AAO) from Cucurbita maxima (Pumpkin).